The chain runs to 89 residues: Large ribosomal subunit protein bL27 (89 aa).

The interval 1–21 is disordered; that stretch reads MAHKKAGGSSRNGRDSKGKRL.

It belongs to the bacterial ribosomal protein bL27 family.

This is Large ribosomal subunit protein bL27 from Bradyrhizobium diazoefficiens (strain JCM 10833 / BCRC 13528 / IAM 13628 / NBRC 14792 / USDA 110).